A 622-amino-acid chain; its full sequence is 1-deoxy-D-xylulose-5-phosphate synthase (622 aa).

Residues histidine 80 and 121–123 each bind thiamine diphosphate; that span reads GHS. Position 152 (aspartate 152) interacts with Mg(2+). Thiamine diphosphate-binding positions include 153–154, asparagine 181, tyrosine 288, and glutamate 370; that span reads GA. Asparagine 181 contributes to the Mg(2+) binding site.

Belongs to the transketolase family. DXPS subfamily. Homodimer. Mg(2+) is required as a cofactor. The cofactor is thiamine diphosphate.

It carries out the reaction D-glyceraldehyde 3-phosphate + pyruvate + H(+) = 1-deoxy-D-xylulose 5-phosphate + CO2. Its pathway is metabolic intermediate biosynthesis; 1-deoxy-D-xylulose 5-phosphate biosynthesis; 1-deoxy-D-xylulose 5-phosphate from D-glyceraldehyde 3-phosphate and pyruvate: step 1/1. In terms of biological role, catalyzes the acyloin condensation reaction between C atoms 2 and 3 of pyruvate and glyceraldehyde 3-phosphate to yield 1-deoxy-D-xylulose-5-phosphate (DXP). The sequence is that of 1-deoxy-D-xylulose-5-phosphate synthase from Shewanella loihica (strain ATCC BAA-1088 / PV-4).